The following is a 754-amino-acid chain: tRNA(Met) cytidine acetyltransferase TmcA (754 aa).

The tract at residues 181-202 (GISFDAAPPRVPTEKDRRSPRR) is disordered. Residues 192-202 (PTEKDRRSPRR) are compositionally biased toward basic and acidic residues. ATP-binding positions include Gln-212, 236-245 (GRGKSSAAGL), and Arg-383. The N-acetyltransferase domain occupies 418–603 (VSYRALSPDD…YSALMTRPLS (186 aa)). Acetyl-CoA contacts are provided by residues 529 to 531 (IAT), 536 to 542 (RSSGLGS), and Glu-568.

The protein belongs to the RNA cytidine acetyltransferase family. TmcA subfamily.

It is found in the cytoplasm. It carries out the reaction cytidine(34) in elongator tRNA(Met) + acetyl-CoA + ATP + H2O = N(4)-acetylcytidine(34) in elongator tRNA(Met) + ADP + phosphate + CoA + H(+). Its function is as follows. Catalyzes the formation of N(4)-acetylcytidine (ac(4)C) at the wobble position of tRNA(Met), by using acetyl-CoA as an acetyl donor and ATP (or GTP). The protein is tRNA(Met) cytidine acetyltransferase TmcA of Haloferax volcanii (strain ATCC 29605 / DSM 3757 / JCM 8879 / NBRC 14742 / NCIMB 2012 / VKM B-1768 / DS2) (Halobacterium volcanii).